Reading from the N-terminus, the 391-residue chain is Cytochrome b (391 aa).

Transmembrane regions (helical) follow at residues 33 to 53 (FGSL…FLAM), 77 to 98 (WLIR…YLHI), 113 to 133 (WSAG…GYVL), and 178 to 198 (FFAF…VHLL). Residues His-83 and His-97 each coordinate heme b. Heme b is bound by residues His-182 and His-196. An a ubiquinone-binding site is contributed by His-201. A run of 4 helical transmembrane segments spans residues 226-246 (YKDL…VLFI), 288-308 (LGGV…PILH), 320-340 (LAQI…WIGG), and 347-367 (FIII…VFFP).

The protein belongs to the cytochrome b family. The cytochrome bc1 complex contains 3 respiratory subunits (MT-CYB, CYC1 and UQCRFS1), 2 core proteins (UQCRC1 and UQCRC2) and probably 6 low-molecular weight proteins. It depends on heme b as a cofactor.

It localises to the mitochondrion inner membrane. In terms of biological role, component of the ubiquinol-cytochrome c reductase complex (complex III or cytochrome b-c1 complex) that is part of the mitochondrial respiratory chain. The b-c1 complex mediates electron transfer from ubiquinol to cytochrome c. Contributes to the generation of a proton gradient across the mitochondrial membrane that is then used for ATP synthesis. The chain is Cytochrome b (mt-cyb) from Kryptolebias marmoratus (Mangrove killifish).